We begin with the raw amino-acid sequence, 764 residues long: MVYNEKNGGGIPPVPLSLNTATPWQNVNLHNDQQTEPQLKSHPDTDPRITPYLGLRARLSQLWFNRWTILLILVLIRVIILTANLKENLGDAKAKALSACTKVEDVGSAMASMPYYMSKGVNVMAAGSMQKAVEAMASVLKMILTGVQAIIMFVINMYIGTFACLVAAFIHGGLHVATAVVEGATKVMNDAISSITKGITDDMKSFQSAIDKARDFINSGIGLISKDIQLPTINIDSHIRDLQGIKINANGVVNGLDVLDQKIPTFDEAKNLTESALAIPFNLVKGKIDTAFSEFTIEPTIFPTAEKQALSFCSNNSFLNDFFESLITLVYKAKIAFLVVIIILALLAIFVMGYIEYRGFKRERERAARMDANAFNSQDAIYIASRRWTADGGMRLAKWWTKDTDSKNYLLIRWAFAYATSLPALFVLSLAVAGMLSCLFQWVLLRQIEKKAPELAAQVGDFAGDVVGTLKQVSNNWANSSNAVVANMESDINSDLFGWVREATESVNNTLTVLDDQIDHALVAVFNGTVLLDTARDVVGCLIGRKIDAVQDGLTWVHDHAKVTLPRFDDDIFSAGAAQSMGSDGDLSSFLAKPGAVTTDEINEAVGKVIRSLRNGVIQEALITLGLFLTYVIVVLIGVMGALIGWATPGKTRGEGGQQFGGRPPSFHNHNGFDPALAPSNAMVGNPASPHYQNEKFGGGGGMHDVASPAYEEVVYAGRVPVGNTRELITRYPSHQRTSSYPTVESPDPMPHGDEKVPGYFTPI.

At methionine 1–glutamine 61 the chain is on the extracellular side. A helical membrane pass occupies residues leucine 62–threonine 82. Topologically, residues alanine 83–alanine 149 are cytoplasmic. The helical transmembrane segment at isoleucine 150–isoleucine 170 threads the bilayer. Residues histidine 171 to lysine 334 lie on the Extracellular side of the membrane. N-linked (GlcNAc...) asparagine glycans are attached at residues asparagine 271 and asparagine 315. The chain crosses the membrane as a helical span at residues isoleucine 335–isoleucine 355. Residues glutamate 356–alanine 424 are Cytoplasmic-facing. Residues leucine 425–leucine 445 traverse the membrane as a helical segment. At arginine 446–threonine 624 the chain is on the extracellular side. N-linked (GlcNAc...) asparagine glycans are attached at residues asparagine 479, asparagine 508, and asparagine 527. Residues leucine 625–glycine 645 traverse the membrane as a helical segment. The Cytoplasmic segment spans residues tryptophan 646–isoleucine 764. Disordered regions lie at residues arginine 653–glycine 701 and histidine 735–aspartate 754.

This sequence belongs to the PRM1 family.

The protein localises to the cell membrane. Involved in cell fusion during mating by stabilizing the plasma membrane fusion event. The protein is Plasma membrane fusion protein prm-1 (prm-1) of Neurospora crassa (strain ATCC 24698 / 74-OR23-1A / CBS 708.71 / DSM 1257 / FGSC 987).